The primary structure comprises 470 residues: Homogentisate 1,2-dioxygenase (470 aa).

Residues His-356, Glu-362, and His-392 each contribute to the Fe cation site.

The protein belongs to the homogentisate dioxygenase family. The cofactor is Fe cation.

It catalyses the reaction homogentisate + O2 = 4-maleylacetoacetate + H(+). Its pathway is amino-acid degradation; L-phenylalanine degradation; acetoacetate and fumarate from L-phenylalanine: step 4/6. This chain is Homogentisate 1,2-dioxygenase (HGO), found in Oryza sativa subsp. japonica (Rice).